The following is a 339-amino-acid chain: UDP-N-acetylglucosamine--N-acetylmuramyl-(pentapeptide) pyrophosphoryl-undecaprenol N-acetylglucosamine transferase (339 aa).

UDP-N-acetyl-alpha-D-glucosamine-binding positions include Thr11 to Gly13, Asn127, Arg170, Ser188, Ile235, and Gln280.

This sequence belongs to the glycosyltransferase 28 family. MurG subfamily.

The protein resides in the cell inner membrane. The enzyme catalyses di-trans,octa-cis-undecaprenyl diphospho-N-acetyl-alpha-D-muramoyl-L-alanyl-D-glutamyl-meso-2,6-diaminopimeloyl-D-alanyl-D-alanine + UDP-N-acetyl-alpha-D-glucosamine = di-trans,octa-cis-undecaprenyl diphospho-[N-acetyl-alpha-D-glucosaminyl-(1-&gt;4)]-N-acetyl-alpha-D-muramoyl-L-alanyl-D-glutamyl-meso-2,6-diaminopimeloyl-D-alanyl-D-alanine + UDP + H(+). It participates in cell wall biogenesis; peptidoglycan biosynthesis. In terms of biological role, cell wall formation. Catalyzes the transfer of a GlcNAc subunit on undecaprenyl-pyrophosphoryl-MurNAc-pentapeptide (lipid intermediate I) to form undecaprenyl-pyrophosphoryl-MurNAc-(pentapeptide)GlcNAc (lipid intermediate II). This chain is UDP-N-acetylglucosamine--N-acetylmuramyl-(pentapeptide) pyrophosphoryl-undecaprenol N-acetylglucosamine transferase, found in Thermotoga petrophila (strain ATCC BAA-488 / DSM 13995 / JCM 10881 / RKU-1).